Reading from the N-terminus, the 177-residue chain is MWSLALTLPSPSLVSVRSTKLGRSVSNGGRNWSGLTKLSEKSKTKRGNGLCCKAELSELAPVVSATYGVLLLGGGLFAYSKSGSKGSLFGGLTGSVLMASAYFLTKSPETRVLGDTIGLGAAFLFSSVFGFRLASSRKPVPAGPLLLLSIGMLSFFVMAYMHDSLPAISIPDPLPLP.

Residues 1–63 constitute a chloroplast transit peptide; that stretch reads MWSLALTLPS…AELSELAPVV (63 aa). 3 helical membrane passes run 85–105, 111–131, and 140–160; these read KGSL…YFLT, RVLG…VFGF, and VPAG…VMAY.

Belongs to the TMEM14 family.

The protein localises to the plastid. Its subcellular location is the chloroplast membrane. May be involved in free fatty acids export from the plastids. The polypeptide is Protein FATTY ACID EXPORT 4, chloroplastic (Arabidopsis thaliana (Mouse-ear cress)).